A 150-amino-acid polypeptide reads, in one-letter code: MYGLILSRFNNCGYHCYETILIDVFDILSKYMDDIDMIDNENKTLLYYAVDVNNIQFAKRLLEYGASVTTSRSIINTAIQKSSYQRENKTRIVDLLLSYHPTLETMIDAFNRDIRYLYPEPLFACIRYALILDDDFPSKVSMISPVIIRN.

Residues 41-73 (ENKTLLYYAVDVNNIQFAKRLLEYGASVTTSRS) form an ANK repeat.

This chain is Ankyrin repeat protein C18/B24, found in Vaccinia virus (strain Copenhagen) (VACV).